The following is a 154-amino-acid chain: Ribosome maturation factor RimP (154 aa).

The protein belongs to the RimP family.

The protein resides in the cytoplasm. Its function is as follows. Required for maturation of 30S ribosomal subunits. The chain is Ribosome maturation factor RimP from Flavobacterium psychrophilum (strain ATCC 49511 / DSM 21280 / CIP 103535 / JIP02/86).